The following is a 222-amino-acid chain: Cytidylate kinase (222 aa).

12-20 lines the ATP pocket; it reads GPSGAGKGT.

This sequence belongs to the cytidylate kinase family. Type 1 subfamily.

It is found in the cytoplasm. It carries out the reaction CMP + ATP = CDP + ADP. The enzyme catalyses dCMP + ATP = dCDP + ADP. This Methylococcus capsulatus (strain ATCC 33009 / NCIMB 11132 / Bath) protein is Cytidylate kinase.